A 348-amino-acid polypeptide reads, in one-letter code: Dihydroorotase (348 aa).

Positions 14 and 16 each coordinate Zn(2+). Substrate-binding positions include 16-18 (HLR) and N42. K100, H137, and H175 together coordinate Zn(2+). N6-carboxylysine is present on K100. H137 lines the substrate pocket. L220 contributes to the substrate binding site. A Zn(2+)-binding site is contributed by D248. D248 is an active-site residue. The substrate site is built by H252 and A264.

This sequence belongs to the metallo-dependent hydrolases superfamily. DHOase family. Class II DHOase subfamily. Homodimer. The cofactor is Zn(2+).

It catalyses the reaction (S)-dihydroorotate + H2O = N-carbamoyl-L-aspartate + H(+). Its pathway is pyrimidine metabolism; UMP biosynthesis via de novo pathway; (S)-dihydroorotate from bicarbonate: step 3/3. Catalyzes the reversible cyclization of carbamoyl aspartate to dihydroorotate. This Pseudomonas aeruginosa (strain UCBPP-PA14) protein is Dihydroorotase.